The following is a 481-amino-acid chain: Ras-GEF domain-containing family member 1A (481 aa).

In terms of domain architecture, N-terminal Ras-GEF spans Q41 to L170. A Ras-GEF domain is found at D214 to P461.

In terms of tissue distribution, detected in brain and spinal cord. Highly expressed in a number of intrahepatic cholangiocarcinoma tissue biopsies.

Its function is as follows. Guanine nucleotide exchange factor (GEF) with specificity for RAP2A, KRAS, HRAS, and NRAS (in vitro). Plays a role in cell migration. The chain is Ras-GEF domain-containing family member 1A (RASGEF1A) from Homo sapiens (Human).